The sequence spans 296 residues: MAFKYHKVAIVGKHYKKEVSQMVETLYAYLQQQGLEIIVENDTAADTSLVNVAIASLKEIALRCDVAIVVGGDGNFLKASRLLALYSNIPVIGINKGKLGFLTTLAADDNALKNDLYAILKGDSSVTKMSMLKCRVDNNLRAPLEASIALNEIAITASRGLMFGLKVFIDGRYAFDQRGDGLIVSTPTGSTAHAMSAGGPILNPNQNSVVLVPICSHSLNSRPLVISDESVIDIYITDYNDPEPVLSIDGRHDTILKAHQKVTIQKARKKVTVLHTKDYNYYDTLREKLGWSKVLF.

D73 (proton acceptor) is an active-site residue. Residues 73-74 (DG), K78, 151-152 (NE), R178, D180, and 191-196 (TAHAMS) contribute to the NAD(+) site.

The protein belongs to the NAD kinase family. A divalent metal cation serves as cofactor.

It localises to the cytoplasm. The catalysed reaction is NAD(+) + ATP = ADP + NADP(+) + H(+). Functionally, involved in the regulation of the intracellular balance of NAD and NADP, and is a key enzyme in the biosynthesis of NADP. Catalyzes specifically the phosphorylation on 2'-hydroxyl of the adenosine moiety of NAD to yield NADP. This Francisella tularensis subsp. holarctica (strain FTNF002-00 / FTA) protein is NAD kinase.